A 234-amino-acid chain; its full sequence is GTP cyclohydrolase 1 type 2 homolog (234 aa).

Residues His-61, His-62, Asp-80, His-195, and Glu-199 each contribute to the a divalent metal cation site.

Belongs to the GTP cyclohydrolase I type 2/NIF3 family. In terms of assembly, homohexamer.

This chain is GTP cyclohydrolase 1 type 2 homolog, found in Methanothermobacter thermautotrophicus (strain ATCC 29096 / DSM 1053 / JCM 10044 / NBRC 100330 / Delta H) (Methanobacterium thermoautotrophicum).